We begin with the raw amino-acid sequence, 311 residues long: 3-oxo-4,17-pregnadiene-20-carboxyl-CoA hydratase alpha subunit (311 aa).

Residues 198–295 (WDGVKAHELR…VAIGMPVRAT (98 aa)) form a DUF35 region.

It belongs to the thioester dehydratase family. In terms of assembly, heterodimer composed of ChsH1 and ChsH2. Two heterodimers combine to form a heterotetramer. The complex interacts with Ltp2 via the DUF35 C-terminal region of ChsH2. The ChsH1-ChsH2-Ltp2 protein complex is composed of two protomers that form a heterohexameric structure through the Ltp2 dimerization interface.

It carries out the reaction 3-oxochola-4,17-dien-22-oyl-CoA + H2O = 17-hydroxy-3-oxochol-4-en-22-oyl-CoA. It catalyses the reaction (2E)-octenoyl-CoA + H2O = 3-hydroxyoctanoyl-CoA. The enzyme catalyses (2E)-decenoyl-CoA + H2O = 3-hydroxydecanoyl-CoA. It functions in the pathway steroid metabolism; cholesterol degradation. Its activity is regulated as follows. In the absence of the Ltp2 aldolase, ChsH1/ChsH2 can hydrate only about 30% of the 3-OPDC-CoA substrate. Complete turnover requires the presence of Ltp2. Functionally, involved in cholesterol side chain degradation. Catalyzes the hydration of 3-oxo-4,17-pregnadiene-20-carboxyl-CoA (3-OPDC-CoA) to form 17-hydroxy-3-oxo-4-pregnene-20-carboxyl-CoA (17-HOPC-CoA), in the modified beta-oxidation pathway for cholesterol side chain degradation. Can also use octenoyl-CoA and decenoyl-CoA, with lower efficiency. This Mycobacterium tuberculosis (strain ATCC 25618 / H37Rv) protein is 3-oxo-4,17-pregnadiene-20-carboxyl-CoA hydratase alpha subunit.